Consider the following 314-residue polypeptide: 3'-5' exoribonuclease YhaM (314 aa).

Residues 14–90 (VDLYLLIKSS…QLKLRNIRPA (77 aa)) constitute a DNA-binding region (OB). Residues 163-279 (HVVSMLNLAK…LHYIDNLDAK (117 aa)) form the HD domain.

It belongs to the YhaM family.

In terms of biological role, shows a 3'-5' exoribonuclease activity. The chain is 3'-5' exoribonuclease YhaM from Bacillus licheniformis (strain ATCC 14580 / DSM 13 / JCM 2505 / CCUG 7422 / NBRC 12200 / NCIMB 9375 / NCTC 10341 / NRRL NRS-1264 / Gibson 46).